The primary structure comprises 340 residues: Ketol-acid reductoisomerase (NADP(+)) (340 aa).

Residues 2-182 form the KARI N-terminal Rossmann domain; the sequence is ANIYYENHAD…GCTRAGVIET (181 aa). NADP(+) is bound by residues 25 to 28, serine 51, serine 53, and 83 to 86; these read FGSQ and DTAQ. Residue histidine 108 is part of the active site. Residue glycine 134 participates in NADP(+) binding. In terms of domain architecture, KARI C-terminal knotted spans 183 to 328; it reads TFAEETETDL…RELRRMMPFV (146 aa). 4 residues coordinate Mg(2+): aspartate 191, glutamate 195, glutamate 227, and glutamate 231. Residue serine 252 participates in substrate binding.

This sequence belongs to the ketol-acid reductoisomerase family. Mg(2+) serves as cofactor.

It carries out the reaction (2R)-2,3-dihydroxy-3-methylbutanoate + NADP(+) = (2S)-2-acetolactate + NADPH + H(+). The catalysed reaction is (2R,3R)-2,3-dihydroxy-3-methylpentanoate + NADP(+) = (S)-2-ethyl-2-hydroxy-3-oxobutanoate + NADPH + H(+). Its pathway is amino-acid biosynthesis; L-isoleucine biosynthesis; L-isoleucine from 2-oxobutanoate: step 2/4. It functions in the pathway amino-acid biosynthesis; L-valine biosynthesis; L-valine from pyruvate: step 2/4. Functionally, involved in the biosynthesis of branched-chain amino acids (BCAA). Catalyzes an alkyl-migration followed by a ketol-acid reduction of (S)-2-acetolactate (S2AL) to yield (R)-2,3-dihydroxy-isovalerate. In the isomerase reaction, S2AL is rearranged via a Mg-dependent methyl migration to produce 3-hydroxy-3-methyl-2-ketobutyrate (HMKB). In the reductase reaction, this 2-ketoacid undergoes a metal-dependent reduction by NADPH to yield (R)-2,3-dihydroxy-isovalerate. The polypeptide is Ketol-acid reductoisomerase (NADP(+)) (Roseiflexus castenholzii (strain DSM 13941 / HLO8)).